Consider the following 232-residue polypeptide: UPF0758 protein Amet_2289 (232 aa).

The MPN domain maps to 110–232 (RIKSPDDVSN…YYSLKEKSMM (123 aa)). Zn(2+) contacts are provided by H181, H183, and D194. The JAMM motif signature appears at 181-194 (HNHPSGDPSPSGED).

The protein belongs to the UPF0758 family.

The polypeptide is UPF0758 protein Amet_2289 (Alkaliphilus metalliredigens (strain QYMF)).